We begin with the raw amino-acid sequence, 292 residues long: Phosphoribulokinase, chromosomal (292 aa).

12–20 (GSSGAGTTS) provides a ligand contact to ATP.

This sequence belongs to the phosphoribulokinase family. In terms of assembly, homooctamer.

The catalysed reaction is D-ribulose 5-phosphate + ATP = D-ribulose 1,5-bisphosphate + ADP + H(+). It functions in the pathway carbohydrate biosynthesis; Calvin cycle. This chain is Phosphoribulokinase, chromosomal (cfxP), found in Cupriavidus necator (strain ATCC 17699 / DSM 428 / KCTC 22496 / NCIMB 10442 / H16 / Stanier 337) (Ralstonia eutropha).